The following is a 611-amino-acid chain: Chaperone protein DnaK (611 aa).

At Thr-173 the chain carries Phosphothreonine; by autocatalysis. The segment covering 577-592 has biased composition (low complexity); the sequence is QAAAGQAEGAEGAQDA. The interval 577 to 598 is disordered; it reads QAAAGQAEGAEGAQDAGAKKDN.

This sequence belongs to the heat shock protein 70 family.

In terms of biological role, acts as a chaperone. The protein is Chaperone protein DnaK of Bacillus anthracis (strain A0248).